A 559-amino-acid polypeptide reads, in one-letter code: Aspartokinase 3, chloroplastic (559 aa).

The transit peptide at Met-1–Cys-85 directs the protein to the chloroplast. ATP-binding residues include Lys-88, Gly-91, and Ser-120. Glu-204 provides a ligand contact to substrate. 2 ACT domains span residues Ile-402–Ser-480 and Leu-481–Ser-559.

This sequence belongs to the aspartokinase family. In terms of tissue distribution, highly expressed in xylem of leaves and hypocotyls, stele of roots and in trichomes after bolting. Weak expression in veins and mesophyll cells of caulone leaves, inflorescence stems, sepals, petals and stigmata.

It is found in the plastid. Its subcellular location is the chloroplast. The enzyme catalyses L-aspartate + ATP = 4-phospho-L-aspartate + ADP. It functions in the pathway amino-acid biosynthesis; L-lysine biosynthesis via DAP pathway; (S)-tetrahydrodipicolinate from L-aspartate: step 1/4. The protein operates within amino-acid biosynthesis; L-methionine biosynthesis via de novo pathway; L-homoserine from L-aspartate: step 1/3. It participates in amino-acid biosynthesis; L-threonine biosynthesis; L-threonine from L-aspartate: step 1/5. With respect to regulation, allosterically inhibited by lysine, but not by S-adenosyl-L-methionine (SAM). K(0.5) for lysine in the presence of physiological concentrations of substrates is 7.4 uM. No inhibition by threonine or leucine and no activation or inhibition by alanine, cysteine, isoleucine, serine, valine, methionine, glutamine, asparagine, glutamic acid or arginine. In terms of biological role, involved in the first step of essential amino acids lysine, threonine, methionine and isoleucine synthesis via the aspartate-family pathway. This Arabidopsis thaliana (Mouse-ear cress) protein is Aspartokinase 3, chloroplastic (AK3).